The sequence spans 88 residues: Small ribosomal subunit protein bS20 (88 aa).

A disordered region spans residues Met1–Met27. The segment covering Ala7–Ala22 has biased composition (basic residues).

The protein belongs to the bacterial ribosomal protein bS20 family.

Functionally, binds directly to 16S ribosomal RNA. This is Small ribosomal subunit protein bS20 from Cellvibrio japonicus (strain Ueda107) (Pseudomonas fluorescens subsp. cellulosa).